Here is a 747-residue protein sequence, read N- to C-terminus: Mitochondrial inner membrane i-AAA protease supercomplex subunit YME1 (747 aa).

Positions 51-64 are enriched in basic and acidic residues; that stretch reads KNSGEMPPKKEADS. The segment at 51–92 is disordered; sequence KNSGEMPPKKEADSSGKASNKSTISSIDNSQPPPPSNTNDKT. Residues 66–80 show a composition bias toward polar residues; the sequence is GKASNKSTISSIDNS. 321 to 328 serves as a coordination point for ATP; it reads GPPGTGKT. Histidine 540 provides a ligand contact to Zn(2+). Glutamate 541 is a catalytic residue. Zn(2+) is bound by residues histidine 544 and aspartate 618. Positions 718 to 747 are disordered; that stretch reads STNTVVEGPDSDERKDIGDDKPKIPTMLNA. A compositionally biased stretch (basic and acidic residues) spans 728–740; that stretch reads SDERKDIGDDKPK.

In the N-terminal section; belongs to the AAA ATPase family. This sequence in the C-terminal section; belongs to the peptidase M41 family. As to quaternary structure, component of the mitochondrial inner membrane i-AAA protease supercomplex composed of MGR1, MGR3 and YME1. Interacts directly with MGR1. Zn(2+) is required as a cofactor.

Its subcellular location is the mitochondrion inner membrane. Catalytic subunit of the mitochondrial inner membrane i-AAA protease supercomplex required for mitochondrial inner membrane protein turnover. The protease is probably ATP-dependent. Important to maintain the integrity of the mitochondrial compartment. Required both for the degradation of unassembled subunit 2 of cytochrome c oxidase (COX2) and for efficient assembly of mitochondrial respiratory chain. Binds unfolded substrates in an ATPase-independent manner; binding of folded COX2, a physiological substrate, requires an active ATPase but when COX2 is destabilized an active ATPase is no longer necessary. May process ATG32. The chain is Mitochondrial inner membrane i-AAA protease supercomplex subunit YME1 (YME1) from Saccharomyces cerevisiae (strain ATCC 204508 / S288c) (Baker's yeast).